Reading from the N-terminus, the 368-residue chain is Homoserine O-acetyltransferase (368 aa).

Residues 47–349 (NAILICHALS…SGEGHDSFLL (303 aa)) form the AB hydrolase-1 domain. Ser153 functions as the Nucleophile in the catalytic mechanism. Residue Arg221 coordinates substrate. Active-site residues include Asp311 and His344. Asp345 serves as a coordination point for substrate.

This sequence belongs to the AB hydrolase superfamily. MetX family. In terms of assembly, homodimer.

Its subcellular location is the cytoplasm. It carries out the reaction L-homoserine + acetyl-CoA = O-acetyl-L-homoserine + CoA. The protein operates within amino-acid biosynthesis; L-methionine biosynthesis via de novo pathway; O-acetyl-L-homoserine from L-homoserine: step 1/1. Its function is as follows. Transfers an acetyl group from acetyl-CoA to L-homoserine, forming acetyl-L-homoserine. This is Homoserine O-acetyltransferase from Leptospira borgpetersenii serovar Hardjo-bovis (strain JB197).